The chain runs to 688 residues: Elongation factor G (688 aa).

The tr-type G domain maps to 6-280 (KLFRNFGIMA…AVVDFLPSPI (275 aa)). GTP-binding positions include 15–22 (AHIDAGKT), 79–83 (DTPGH), and 133–136 (NKMD).

This sequence belongs to the TRAFAC class translation factor GTPase superfamily. Classic translation factor GTPase family. EF-G/EF-2 subfamily.

It is found in the cytoplasm. Catalyzes the GTP-dependent ribosomal translocation step during translation elongation. During this step, the ribosome changes from the pre-translocational (PRE) to the post-translocational (POST) state as the newly formed A-site-bound peptidyl-tRNA and P-site-bound deacylated tRNA move to the P and E sites, respectively. Catalyzes the coordinated movement of the two tRNA molecules, the mRNA and conformational changes in the ribosome. The polypeptide is Elongation factor G (Ureaplasma urealyticum serovar 10 (strain ATCC 33699 / Western)).